The following is a 342-amino-acid chain: Trans-3-hydroxy-L-proline dehydratase (342 aa).

The active-site Proton acceptor is Ser90. Residues Gly91–Ser92, Asp252, and Gly257–Thr258 each bind substrate.

It belongs to the proline racemase family.

It carries out the reaction trans-3-hydroxy-L-proline = 1-pyrroline-2-carboxylate + H2O. The enzyme catalyses trans-4-hydroxy-L-proline = cis-4-hydroxy-D-proline. Catalyzes the dehydration of trans-3-hydroxy-L-proline (t3LHyp) to Delta(1)-pyrroline-2-carboxylate (Pyr2C). Can also catalyze the epimerization of trans-4-hydroxy-L-proline (t4LHyp) to cis-4-hydroxy-D-proline (c4DHyp), albeit with 30-fold lower efficiency. Is likely involved in both degradation pathways that convert t3LHyp to L-proline and t4LHyp to alpha-ketoglutarate, which would allow A.tumefaciens to grow on t3LHyp or t4LHyp as a sole carbon source. Displays no proline racemase activity. This is Trans-3-hydroxy-L-proline dehydratase from Agrobacterium fabrum (strain C58 / ATCC 33970) (Agrobacterium tumefaciens (strain C58)).